Reading from the N-terminus, the 131-residue chain is Profilin-3 (131 aa).

It belongs to the profilin family. As to quaternary structure, occurs in many kinds of cells as a complex with monomeric actin in a 1:1 ratio.

It is found in the cytoplasm. Its subcellular location is the cytoskeleton. In terms of biological role, binds to actin and affects the structure of the cytoskeleton. At high concentrations, profilin prevents the polymerization of actin, whereas it enhances it at low concentrations. By binding to PIP2, it inhibits the formation of IP3 and DG. This is Profilin-3 (PRO3) from Triticum aestivum (Wheat).